A 118-amino-acid polypeptide reads, in one-letter code: Large ribosomal subunit protein mL53 (118 aa).

A disordered region spans residues 99–118 (AAAASAPGADKVAPGTSTRR).

The protein belongs to the mitochondrion-specific ribosomal protein mL53 family. As to quaternary structure, component of the mitochondrial ribosome large subunit (39S) which comprises a 16S rRNA and about 50 distinct proteins.

The protein resides in the mitochondrion. The sequence is that of Large ribosomal subunit protein mL53 (Mrpl53) from Mus musculus (Mouse).